Here is a 413-residue protein sequence, read N- to C-terminus: Bestrophin homolog 13 (413 aa).

A run of 4 helical transmembrane segments spans residues Leu29–Ile49, Ser72–Ala92, Leu236–Gly256, and Leu272–Gly292.

This sequence belongs to the anion channel-forming bestrophin (TC 1.A.46) family. Calcium-sensitive chloride channel subfamily. Forms oligomers.

The protein localises to the cell membrane. Functionally, forms chloride channels. This chain is Bestrophin homolog 13 (best-13), found in Caenorhabditis elegans.